Consider the following 491-residue polypeptide: Anhydromuropeptide permease (491 aa).

The Cytoplasmic segment spans residues 1-11; sequence MSSQYLRIFQQ. Residues 12-32 traverse the membrane as a helical segment; the sequence is PRSAILLILGFASGLPLALTS. Residues 33 to 47 lie on the Periplasmic side of the membrane; it reads GTLQAWMTVENIDLK. The chain crosses the membrane as a helical span at residues 48 to 61; the sequence is TIGFFSLVGQAYVF. Residues 62-81 lie on the Cytoplasmic side of the membrane; sequence KFLWSPLMDRYTPPFFGRRR. Residues 82–105 form a helical membrane-spanning segment; the sequence is GWLLATQILLLVAIAAMGFLEPGT. A topological domain (periplasmic) is located at residue glutamine 106. Residues 107-124 form a helical membrane-spanning segment; it reads LRWMAALAVVIAFCSASQ. Over 125 to 221 the chain is Cytoplasmic; the sequence is DIVFDAWKTD…VAPLRDFFGR (97 aa). The chain crosses the membrane as a helical span at residues 222 to 240; the sequence is NNAWLILLLIVLYKLGDAF. At 241–264 the chain is on the periplasmic side; that stretch reads AMSLTTTFLIRGVGFDAGEVGVVN. The helical transmembrane segment at 265–284 threads the bilayer; that stretch reads KTLGLLATIVGALYGGILMQ. Topologically, residues 285–287 are cytoplasmic; that stretch reads RLS. The helical transmembrane segment at 288–303 threads the bilayer; the sequence is LFRALLIFGILQGASN. Residues 304–327 are Periplasmic-facing; that stretch reads AGYWLLSITDKHLYSMGAAVFFEN. Residues 328-346 traverse the membrane as a helical segment; it reads LCGGMGTSAFVALLMTLCN. At 347-421 the chain is on the cytoplasmic side; the sequence is KSFSATQFAL…NDNFISRTAY (75 aa). The helical transmembrane segment at 422 to 453 threads the bilayer; that stretch reads PAGYAFAMWTLAAGVSLLAVWLLLLTMDALDL. At 454 to 457 the chain is on the periplasmic side; that stretch reads THFS. Residues 458–485 form a helical membrane-spanning segment; sequence FLPALLEVGVLVALSGVVLGGLLDYLAL. Over 486-491 the chain is Cytoplasmic; the sequence is RKTHLT.

This sequence belongs to the major facilitator superfamily.

Its subcellular location is the cell inner membrane. Functionally, permease involved in cell wall peptidoglycan recycling. Transports, from the periplasm into the cytoplasm, the disaccharide N-acetylglucosaminyl-beta-1,4-anhydro-N-acetylmuramic acid (GlcNAc-anhMurNAc) and GlcNAc-anhMurNAc-peptides. Transport is dependent on the proton motive force. This is Anhydromuropeptide permease (ampG) from Escherichia coli O157:H7.